The following is a 489-amino-acid chain: Glutamate--tRNA ligase (489 aa).

Residues Pro-10–Gly-20 carry the 'HIGH' region motif. The 'KMSKS' region signature appears at Lys-261–Arg-265. Lys-264 contacts ATP.

The protein belongs to the class-I aminoacyl-tRNA synthetase family. Glutamate--tRNA ligase type 1 subfamily. As to quaternary structure, monomer.

It localises to the cytoplasm. The enzyme catalyses tRNA(Glu) + L-glutamate + ATP = L-glutamyl-tRNA(Glu) + AMP + diphosphate. Its function is as follows. Catalyzes the attachment of glutamate to tRNA(Glu) in a two-step reaction: glutamate is first activated by ATP to form Glu-AMP and then transferred to the acceptor end of tRNA(Glu). This chain is Glutamate--tRNA ligase, found in Finegoldia magna (strain ATCC 29328 / DSM 20472 / WAL 2508) (Peptostreptococcus magnus).